The primary structure comprises 503 residues: Lanosterol 14-alpha demethylase (503 aa).

The chain crosses the membrane as a helical span at residues 24–44 (GNLLSTLLIACAFTLSLVYLF). A heme-binding site is contributed by C449.

It belongs to the cytochrome P450 family. Heme is required as a cofactor. Ubiquitinated by MARCHF6, leading to proteasomal degradation.

It is found in the endoplasmic reticulum membrane. It localises to the microsome membrane. It catalyses the reaction a 14alpha-methyl steroid + 3 reduced [NADPH--hemoprotein reductase] + 3 O2 = a Delta(14) steroid + formate + 3 oxidized [NADPH--hemoprotein reductase] + 4 H2O + 4 H(+). It carries out the reaction lanosterol + 3 reduced [NADPH--hemoprotein reductase] + 3 O2 = 4,4-dimethyl-5alpha-cholesta-8,14,24-trien-3beta-ol + formate + 3 oxidized [NADPH--hemoprotein reductase] + 4 H2O + 4 H(+). The catalysed reaction is 24,25-dihydrolanosterol + 3 reduced [NADPH--hemoprotein reductase] + 3 O2 = 4,4-dimethyl-8,14-cholestadien-3beta-ol + formate + 3 oxidized [NADPH--hemoprotein reductase] + 4 H2O + 4 H(+). The enzyme catalyses a 14alpha-methyl steroid + reduced [NADPH--hemoprotein reductase] + O2 = a 14alpha-hydroxymethyl steroid + oxidized [NADPH--hemoprotein reductase] + H2O + H(+). It catalyses the reaction a 14alpha-hydroxymethyl steroid + reduced [NADPH--hemoprotein reductase] + O2 = a 14alpha-formyl steroid + oxidized [NADPH--hemoprotein reductase] + 2 H2O + H(+). It carries out the reaction a 14alpha-formyl steroid + reduced [NADPH--hemoprotein reductase] + O2 = a Delta(14) steroid + formate + oxidized [NADPH--hemoprotein reductase] + H2O + 2 H(+). The catalysed reaction is lanosterol + reduced [NADPH--hemoprotein reductase] + O2 = 32-hydroxylanosterol + oxidized [NADPH--hemoprotein reductase] + H2O + H(+). The enzyme catalyses 32-hydroxylanosterol + reduced [NADPH--hemoprotein reductase] + O2 = 32-oxolanosterol + oxidized [NADPH--hemoprotein reductase] + 2 H2O + H(+). It catalyses the reaction 32-oxolanosterol + reduced [NADPH--hemoprotein reductase] + O2 = 4,4-dimethyl-5alpha-cholesta-8,14,24-trien-3beta-ol + formate + oxidized [NADPH--hemoprotein reductase] + H2O + 2 H(+). It carries out the reaction 24,25-dihydrolanosterol + reduced [NADPH--hemoprotein reductase] + O2 = 32-hydroxy-24,25-dihydrolanosterol + oxidized [NADPH--hemoprotein reductase] + H2O + H(+). The catalysed reaction is 32-hydroxy-24,25-dihydrolanosterol + reduced [NADPH--hemoprotein reductase] + O2 = 32-oxo-24,25-dihydrolanosterol + oxidized [NADPH--hemoprotein reductase] + 2 H2O + H(+). The enzyme catalyses 32-oxo-24,25-dihydrolanosterol + reduced [NADPH--hemoprotein reductase] + O2 = 4,4-dimethyl-8,14-cholestadien-3beta-ol + formate + oxidized [NADPH--hemoprotein reductase] + H2O + 2 H(+). It participates in steroid biosynthesis; zymosterol biosynthesis; zymosterol from lanosterol: step 1/6. Its activity is regulated as follows. Inhibited by azalanstat. Inhibited by azole antifungal agents ketoconazole, itraconazole and fluconazole. Functionally, sterol 14alpha-demethylase that plays a critical role in the cholesterol biosynthesis pathway, being cholesterol the major sterol component in mammalian membranes as well as a precursor for bile acid and steroid hormone synthesis. Cytochrome P450 monooxygenase that catalyzes the three-step oxidative removal of the 14alpha-methyl group (C-32) of sterols such as lanosterol (lanosta-8,24-dien-3beta-ol) and 24,25-dihydrolanosterol (DHL) in the form of formate, and converts the sterols to 4,4-dimethyl-5alpha-cholesta-8,14,24-trien-3beta-ol and 4,4-dimethyl-8,14-cholestadien-3beta-ol, respectively, which are intermediates of cholesterol biosynthesis. Can also demethylate substrates not intrinsic to mammals, such as eburicol (24-methylene-24,25-dihydrolanosterol), but at a lower rate than DHL. The chain is Lanosterol 14-alpha demethylase from Rattus norvegicus (Rat).